The sequence spans 296 residues: Homoserine kinase (296 aa).

85–95 (PVARGLGSSAA) is a binding site for ATP.

It belongs to the GHMP kinase family. Homoserine kinase subfamily.

Its subcellular location is the cytoplasm. It carries out the reaction L-homoserine + ATP = O-phospho-L-homoserine + ADP + H(+). Its pathway is amino-acid biosynthesis; L-threonine biosynthesis; L-threonine from L-aspartate: step 4/5. Its function is as follows. Catalyzes the ATP-dependent phosphorylation of L-homoserine to L-homoserine phosphate. The sequence is that of Homoserine kinase from Moorella thermoacetica (strain ATCC 39073 / JCM 9320).